Consider the following 885-residue polypeptide: Cytosolic carboxypeptidase-like protein 5 (885 aa).

The region spanning 157–570 is the Peptidase M14 domain; it reads YPFSYSDCQD…AMAIAALDMA (414 aa). Zn(2+) is bound by residues His-252 and Glu-255. The segment at 343-402 is disordered; sequence NSQSPSEHQHSSHLPPDAPLSDPEKADSLQNRAHLGRSSSGDKPEAWTQTEVAEQKPNSV. Over residues 388-402 the composition is skewed to polar residues; it reads AWTQTEVAEQKPNSV. His-434 lines the Zn(2+) pocket. Glu-516 functions as the Proton donor/acceptor in the catalytic mechanism. Disordered stretches follow at residues 605–733 and 783–839; these read TTVN…LASS and RLQA…PRPC. Over residues 620–640 the composition is skewed to polar residues; it reads PPRSNNGLPVSCSENTLSRAR. 2 stretches are compositionally biased toward low complexity: residues 641–666 and 714–733; these read SFST…NSPS and PTSS…LASS. Ser-840 carries the phosphoserine modification.

Belongs to the peptidase M14 family. Requires Zn(2+) as cofactor.

Its subcellular location is the cytoplasm. It is found in the cytosol. The protein resides in the nucleus. The protein localises to the cytoskeleton. It localises to the spindle. Its subcellular location is the midbody. The catalysed reaction is gamma-L-glutamyl-L-glutamyl-[protein] + H2O = L-glutamyl-[protein] + L-glutamate. It catalyses the reaction (L-glutamyl)(n+1)-gamma-L-glutamyl-L-glutamyl-[protein] + H2O = (L-glutamyl)(n)-gamma-L-glutamyl-L-glutamyl-[protein] + L-glutamate. It carries out the reaction C-terminal L-alpha-aminoacyl-L-glutamyl-[tubulin] + H2O = C-terminal L-alpha-aminoacyl-[tubulin] + L-glutamate. The enzyme catalyses C-terminal L-alpha-aminoacyl-L-glutamyl-L-glutamyl-[tubulin] + H2O = C-terminal L-alpha-aminoacyl-L-glutamyl-[tubulin] + L-glutamate. In terms of biological role, metallocarboxypeptidase that mediates deglutamylation of tubulin and non-tubulin target proteins. Catalyzes the removal of polyglutamate side chains present on the gamma-carboxyl group of glutamate residues within the C-terminal tail of alpha- and beta-tubulin. Cleaves alpha- and gamma-linked polyglutamate tubulin side-chain, as well as the branching point glutamate. Also catalyzes the removal of alpha-linked glutamate residues from the carboxy-terminus of alpha-tubulin. Mediates deglutamylation of nucleotidyltransferase CGAS, leading to CGAS antiviral defense response activation. This Bos taurus (Bovine) protein is Cytosolic carboxypeptidase-like protein 5 (AGBL5).